Consider the following 325-residue polypeptide: Probable WRKY transcription factor 11 (325 aa).

The segment at residues 240-306 (KIADIPPDEY…YEGEHRHNQS (67 aa)) is a DNA-binding region (WRKY).

This sequence belongs to the WRKY group II-d family. In terms of tissue distribution, in young, mature and senescent leaves.

The protein resides in the nucleus. In terms of biological role, transcription factor. Interacts specifically with the W box (5'-(T)TGAC[CT]-3'), a frequently occurring elicitor-responsive cis-acting element. Regulates rhizobacterium B.cereus AR156-induced systemic resistance (ISR) to P.syringae pv. tomato DC3000, probably by activating the jasmonic acid (JA)- signaling pathway. The polypeptide is Probable WRKY transcription factor 11 (WRKY11) (Arabidopsis thaliana (Mouse-ear cress)).